A 169-amino-acid chain; its full sequence is uncharacterized protein (169 aa).

The region spanning cysteine 32–leucine 162 is the Nudix hydrolase domain. The Nudix box motif lies at glycine 69–asparagine 91. Residues glutamate 85 and glutamate 89 each contribute to the Mg(2+) site.

This sequence belongs to the Nudix hydrolase family. It depends on Mg(2+) as a cofactor.

This is an uncharacterized protein from Nostoc sp. (strain PCC 7120 / SAG 25.82 / UTEX 2576).